The sequence spans 360 residues: Phospho-N-acetylmuramoyl-pentapeptide-transferase (360 aa).

10 consecutive transmembrane segments (helical) span residues 19 to 39 (LTYL…LSIF), 73 to 93 (TMGG…WADL), 95 to 115 (SVYT…GWTD), 136 to 156 (YLSL…DTPI), 173 to 193 (GILF…AVNL), 199 to 219 (GLAI…AYLS), 233 to 253 (IAGA…GLGF), 263 to 283 (VFMG…VAVV), 288 to 308 (LAFA…MIQV), and 338 to 358 (VTIR…STLK).

It belongs to the glycosyltransferase 4 family. MraY subfamily. The cofactor is Mg(2+).

Its subcellular location is the cell inner membrane. It catalyses the reaction UDP-N-acetyl-alpha-D-muramoyl-L-alanyl-gamma-D-glutamyl-meso-2,6-diaminopimeloyl-D-alanyl-D-alanine + di-trans,octa-cis-undecaprenyl phosphate = di-trans,octa-cis-undecaprenyl diphospho-N-acetyl-alpha-D-muramoyl-L-alanyl-D-glutamyl-meso-2,6-diaminopimeloyl-D-alanyl-D-alanine + UMP. The protein operates within cell wall biogenesis; peptidoglycan biosynthesis. Catalyzes the initial step of the lipid cycle reactions in the biosynthesis of the cell wall peptidoglycan: transfers peptidoglycan precursor phospho-MurNAc-pentapeptide from UDP-MurNAc-pentapeptide onto the lipid carrier undecaprenyl phosphate, yielding undecaprenyl-pyrophosphoryl-MurNAc-pentapeptide, known as lipid I. The protein is Phospho-N-acetylmuramoyl-pentapeptide-transferase of Dichelobacter nodosus (strain VCS1703A).